Consider the following 451-residue polypeptide: POC1 centriolar protein homolog B (451 aa).

7 WD repeats span residues 16 to 55 (GHKAAITSLDLSPNGKQLATASWDTFLMLWNFKPHARAYR), 58 to 99 (GHKD…SEFK), 101 to 139 (HTAPVRSVDFSADGQFLATASEDKSIKVWSMYRQRFLYS), 142 to 181 (RHTHWVRCAKFSPDGRLIVSCSEDKTIKIWDTTNKQCVNN), 183 to 223 (SDSV…LLQH), 226 to 265 (VHSGGVNCISFHPSDNYLVTASSDGTLKILDLLEGRLIYT), and 268 to 307 (GHTGPVFTVSFSKGGELFASGGADTQVLLWRTNFDELHCK). Position 321 is a phosphoserine (Ser-321). Residues 372-394 (PECSPTTTKKKTEDMSDLPSESQ) form a disordered region. Positions 404 to 443 (ALEHIMEQLNVLTQTVSILEQRLTLTEDKLKDCLENQQKL) form a coiled coil.

It belongs to the WD repeat POC1 family. Interacts with POC1A. Interacts with FAM161A. Interacts with CEP44; the interaction is direct and recruits POC1B to centriolar microtubules. Forms a microtubule-associated complex with POC5, CETN2 and FAM161A. Interacts with CCDC15. Phosphorylated in mitotic cells that may be mediated by CDK1.

The protein localises to the cytoplasm. The protein resides in the cytoskeleton. Its subcellular location is the microtubule organizing center. It localises to the centrosome. It is found in the centriole. The protein localises to the cilium basal body. The protein resides in the spindle pole. Plays an important role in centriole assembly and/or stability and ciliogenesis. Involved in early steps of centriole duplication, as well as in the later steps of centriole length control. Acts in concert with POC1A to ensure centriole integrity and proper mitotic spindle formation. Required for primary cilia formation, ciliary length and also cell proliferation. Required for retinal integrity. Acts as a positive regulator of centriole elongation. This is POC1 centriolar protein homolog B (POC1B) from Pongo abelii (Sumatran orangutan).